Reading from the N-terminus, the 218-residue chain is MIP18 family protein galla-1 (218 aa).

Residues 1–59 form a disordered region; sequence MLSYIKRKLSESDSGVSSVATVTSSCGGDSGRAGGTGSSESGTGSSSASISGRSQNADE. The span at 12–27 shows a compositional bias: low complexity; sequence SDSGVSSVATVTSSCG. Residue S14 is modified to Phosphoserine. Residues 28–37 are compositionally biased toward gly residues; it reads GDSGRAGGTG. Over residues 38-54 the composition is skewed to low complexity; the sequence is SSESGTGSSSASISGRS. The residue at position 65 (S65) is a Phosphoserine.

The protein belongs to the MIP18 family. In terms of assembly, component of the CGX complex composed of crb, galla (galla-1 or galla-2) and Xpd. Interacts with crb (via intracellular domain). Is not able to interact with Xpd in the absence of crb.

The protein localises to the apical cell membrane. Its subcellular location is the cytoplasm. The protein resides in the cytoskeleton. It is found in the spindle. Component of the crb-galla-Xpd (CGX) complex which is essential for proper mitotic chromosome segregation in early embryos. The CGX complex is also required for cell proliferation in developing wing disks. In the CGX complex, acts with crb to recruit Xpd thus forming the functional complex. This is MIP18 family protein galla-1 from Drosophila melanogaster (Fruit fly).